The chain runs to 495 residues: Dipeptide and tripeptide permease A (495 aa).

Over 1 to 20 (MTTSALNPLRQPKPFYLIFS) the chain is Cytoplasmic. Residues 21–41 (IEFWERFGFYGLQGILAVYLV) traverse the membrane as a helical segment. Topologically, residues 42-51 (KALGLREADS) are periplasmic. The chain crosses the membrane as a helical span at residues 52–72 (FTLFSSFIALVYGLIAVGGWL). Residues 73-81 (GDKVLGTKR) lie on the Cytoplasmic side of the membrane. 2 consecutive transmembrane segments (helical) span residues 82-102 (TILL…ASSE) and 103-123 (HISL…LFKA). At 124-145 (NPSSLLSKCYEENDPRLDGAFT) the chain is on the periplasmic side. Residues 146-166 (MYYMAINIGSLLSMLATPWLA) form a helical membrane-spanning segment. Residues 167 to 171 (DQFGY) are Cytoplasmic-facing. Residues 172–192 (AHAFALSVVGMLITVANFILM) form a helical membrane-spanning segment. Residues 193 to 209 (QGWVKNYGSDADFRTPR) are Periplasmic-facing. The helical transmembrane segment at 210 to 230 (LSTWLAVLAGVVAACAAAALL) threads the bilayer. The Cytoplasmic segment spans residues 231 to 232 (LK). The chain crosses the membrane as a helical span at residues 233-253 (HEIIANVVLAVLSIGVVGLYV). Residues 254 to 266 (KETLLLKGAERKK) lie on the Periplasmic side of the membrane. Residues 267-287 (MIVAAILMLQATVFFVLYNQM) form a helical membrane-spanning segment. Over 288 to 312 (PLSLNFFAIHNTEHMLFGIPVQPEQ) the chain is Cytoplasmic. The chain crosses the membrane as a helical span at residues 313–333 (FQSLNPFWIMLASPLLALCYN). Over 334 to 344 (KLGNRLPMPHK) the chain is Periplasmic. The helical transmembrane segment at 345 to 365 (FAIGMVLCAGAFLVLPLGAKY) threads the bilayer. Residues 366–375 (ANAQGLVSSN) lie on the Cytoplasmic side of the membrane. A helical transmembrane segment spans residues 376 to 396 (WMVLSYLLQSVGELLISGLGL). Residues 397–409 (AMVAQLVPQRLMG) are Periplasmic-facing. Residues 410–430 (FIMGAWFLTSAASSVIAGWVA) traverse the membrane as a helical segment. Residues 431-451 (GLTAAPDNVTNPLATLEIYSR) lie on the Cytoplasmic side of the membrane. Residues 452–472 (VFTQIGVVTGVIAVVTIIIAP) form a helical membrane-spanning segment. The Periplasmic portion of the chain corresponds to 473-495 (WLHRMTLDEKPAHPEHEMALDAR).

Belongs to the major facilitator superfamily. Proton-dependent oligopeptide transporter (POT/PTR) (TC 2.A.17) family. DtpA subfamily.

It is found in the cell inner membrane. Functionally, proton-dependent permease that transports di- and tripeptides. This Chromobacterium violaceum (strain ATCC 12472 / DSM 30191 / JCM 1249 / CCUG 213 / NBRC 12614 / NCIMB 9131 / NCTC 9757 / MK) protein is Dipeptide and tripeptide permease A.